The chain runs to 375 residues: Vasculin (375 aa).

Disordered stretches follow at residues 49 to 109 and 356 to 375; these read SSDA…TSEI and DSVQ…SDDE. The span at 96–108 shows a compositional bias: polar residues; it reads MKSQLHSENNTSE. Residues 365–375 show a composition bias toward low complexity; sequence TSSSSDTSDDE.

The protein belongs to the vasculin family.

Its subcellular location is the nucleus. In terms of biological role, functions as a GC-rich promoter-specific transactivating transcription factor. This chain is Vasculin (gpbp1), found in Xenopus tropicalis (Western clawed frog).